A 221-amino-acid chain; its full sequence is Serine/arginine-rich splicing factor 9 (221 aa).

RRM domains lie at 14–89 and 111–187; these read GRIY…FPRT and FRVL…PERS. A Glycyl lysine isopeptide (Lys-Gly) (interchain with G-Cter in SUMO2) cross-link involves residue Lys-36. The interaction with SAFB1 stretch occupies residues 188–200; the sequence is TSYGYSRSRSGSR. Ser-189 bears the Phosphoserine mark. Residues 189 to 198 show a composition bias toward low complexity; that stretch reads SYGYSRSRSG. The interval 189–221 is disordered; the sequence is SYGYSRSRSGSRGRDSPYQSRGSPHYFSPFRPY. Tyr-192 is modified (phosphotyrosine). Residues Ser-193, Ser-195, Ser-204, Ser-208, and Ser-211 each carry the phosphoserine modification. Tyr-214 carries the phosphotyrosine modification. Position 216 is a phosphoserine (Ser-216).

The protein belongs to the splicing factor SR family. Interacts with KHDRBS3. Interacts with HABP4. Interacts with NOL3/ARC/NOP30. Interacts with NSEP1/YB-1/YB1. Interacts with SAFB/SAFB1. Interacts with SRSF6/SFRS6. Interacts with TRA2B/SFRS10. Interacts with C1QBP. May also interact with DUSP11/PIR1. Post-translationally, extensively phosphorylated on serine residues in the RS domain. Expressed at high levels in the heart, kidney, pancreas and placenta, and at lower levels in the brain, liver, lung and skeletal muscle.

It localises to the nucleus. In terms of biological role, plays a role in constitutive splicing and can modulate the selection of alternative splice sites. Represses the splicing of MAPT/Tau exon 10. This chain is Serine/arginine-rich splicing factor 9 (SRSF9), found in Homo sapiens (Human).